Consider the following 124-residue polypeptide: Small ribosomal subunit protein bS6 (124 aa).

This sequence belongs to the bacterial ribosomal protein bS6 family.

Its function is as follows. Binds together with bS18 to 16S ribosomal RNA. In Chromobacterium violaceum (strain ATCC 12472 / DSM 30191 / JCM 1249 / CCUG 213 / NBRC 12614 / NCIMB 9131 / NCTC 9757 / MK), this protein is Small ribosomal subunit protein bS6.